We begin with the raw amino-acid sequence, 136 residues long: UPF0216 protein PYRAB16100 (136 aa).

The protein belongs to the UPF0216 family.

The chain is UPF0216 protein PYRAB16100 from Pyrococcus abyssi (strain GE5 / Orsay).